Reading from the N-terminus, the 193-residue chain is Acyl carrier protein phosphodiesterase (193 aa).

It belongs to the AcpH family.

The catalysed reaction is holo-[ACP] + H2O = apo-[ACP] + (R)-4'-phosphopantetheine + H(+). Converts holo-ACP to apo-ACP by hydrolytic cleavage of the phosphopantetheine prosthetic group from ACP. This is Acyl carrier protein phosphodiesterase from Escherichia coli O139:H28 (strain E24377A / ETEC).